The primary structure comprises 253 residues: Triosephosphate isomerase, cytosolic (253 aa).

Substrate contacts are provided by N10 and K12. H96 functions as the Electrophile in the catalytic mechanism. The active-site Proton acceptor is the E166.

It belongs to the triosephosphate isomerase family. Homodimer.

The protein localises to the cytoplasm. It catalyses the reaction D-glyceraldehyde 3-phosphate = dihydroxyacetone phosphate. It participates in carbohydrate biosynthesis; gluconeogenesis. The protein operates within carbohydrate degradation; glycolysis; D-glyceraldehyde 3-phosphate from glycerone phosphate: step 1/1. The protein is Triosephosphate isomerase, cytosolic of Secale cereale (Rye).